Consider the following 526-residue polypeptide: 2-isopropylmalate synthase (526 aa).

The 263-residue stretch at V5–Y267 folds into the Pyruvate carboxyltransferase domain. 4 residues coordinate Mn(2+): D14, H202, H204, and N238. The interval R393–H526 is regulatory domain.

It belongs to the alpha-IPM synthase/homocitrate synthase family. LeuA type 1 subfamily. Homodimer. It depends on Mn(2+) as a cofactor.

The protein resides in the cytoplasm. The enzyme catalyses 3-methyl-2-oxobutanoate + acetyl-CoA + H2O = (2S)-2-isopropylmalate + CoA + H(+). The protein operates within amino-acid biosynthesis; L-leucine biosynthesis; L-leucine from 3-methyl-2-oxobutanoate: step 1/4. Catalyzes the condensation of the acetyl group of acetyl-CoA with 3-methyl-2-oxobutanoate (2-ketoisovalerate) to form 3-carboxy-3-hydroxy-4-methylpentanoate (2-isopropylmalate). In Edwardsiella ictaluri (strain 93-146), this protein is 2-isopropylmalate synthase.